The primary structure comprises 219 residues: Ribose-5-phosphate isomerase A (219 aa).

Substrate-binding positions include 28–31 (TGST), 81–84 (DGAD), and 94–97 (KGGG). The Proton acceptor role is filled by glutamate 103. Lysine 121 lines the substrate pocket.

It belongs to the ribose 5-phosphate isomerase family. As to quaternary structure, homodimer.

It catalyses the reaction aldehydo-D-ribose 5-phosphate = D-ribulose 5-phosphate. The protein operates within carbohydrate degradation; pentose phosphate pathway; D-ribose 5-phosphate from D-ribulose 5-phosphate (non-oxidative stage): step 1/1. In terms of biological role, catalyzes the reversible conversion of ribose-5-phosphate to ribulose 5-phosphate. The polypeptide is Ribose-5-phosphate isomerase A (Methylibium petroleiphilum (strain ATCC BAA-1232 / LMG 22953 / PM1)).